The sequence spans 352 residues: Minor capsid protein VP2 (352 aa).

The N-myristoyl glycine; by host moiety is linked to residue Gly-2. Residues 273-308 (SGEFIEKTLAPGGANQRIAPQWMLPLLLGLYGTVTP) form a D1 region. Residues 290-310 (IAPQWMLPLLLGLYGTVTPAL) form a helical membrane-spanning segment. Positions 312-352 (AYEDAPSKKKRRMSRGSSQKAKGPRASSKTSYKRRRRSTRS) are disordered. Residues 313–352 (YEDAPSKKKRRMSRGSSQKAKGPRASSKTSYKRRRRSTRS) form a DNA-binding region. The Nuclear localization signal signature appears at 316–324 (APSKKKRRM). The segment covering 342–352 (SYKRRRRSTRS) has biased composition (basic residues).

Belongs to the polyomaviruses capsid protein VP2 family. As to quaternary structure, forms homooligomers, and heterooligomers with VP3 in the endoplasmic reticulum membrane. Interacts (via D1 domain) with VP1. In terms of assembly, interacts (via D1 domain) with VP1.

The protein resides in the virion. It localises to the host nucleus. Its subcellular location is the host endoplasmic reticulum. The protein localises to the host endoplasmic reticulum membrane. In terms of biological role, structural protein that resides within the core of the capsid surrounded by 72 VP1 pentamers. Participates in host cell receptor binding together with VP1. Following virus endocytosis and trafficking to the endoplasmic reticulum, VP2 and VP3 form oligomers and integrate into the endoplasmic reticulum membrane. Heterooligomer VP2-VP3 may create a viroporin for transporting the viral genome across the endoplasmic reticulum membrane to the cytoplasm. Nuclear entry of the viral DNA involves the selective exposure and importin recognition of VP2 or VP3 nuclear localization signal (shared C-terminus). Plays a role in virion assembly within the nucleus in particular through a DNA-binding domain located in the C-terminal region. An N-terminal myristoylation suggests a scaffold function for virion assembly. Functionally, structural protein that resides within the core of the capsid surrounded by 72 VP1 pentamers. Following virus endocytosis and trafficking to the endoplasmic reticulum, VP2 and VP3 form oligomers and integrate into the endoplasmic reticulum membrane. Heterooligomer VP2-VP3 may create a viroporin for transporting the viral genome across the endoplasmic reticulum membrane to the cytoplasm. Nuclear entry of the viral DNA involves the selective exposure and importin recognition of VP2 or VP3 nuclear localization signal (shared C-terminus). Plays a role in virion assembly within the nucleus. May participate in host cell lysis when associated with VP4. Its function is as follows. Viroporin inducing perforation of cellular membranes to trigger virus progeny release. Forms pores of 3 nm inner diameter. VP4 is expressed about 24 hours after the late structural proteins and is not incorporated into the mature virion. This is Minor capsid protein VP2 from Simian virus 12 (strain wt100) (SV-12).